We begin with the raw amino-acid sequence, 215 residues long: Vacuolar ATPase assembly integral membrane protein VPH2 (215 aa).

At 1-134 (MFEIKLNDRI…SQINKQIKEQ (134 aa)) the chain is on the cytoplasmic side. Residues 135-155 (VTTVFNVLVSVISVVVAIWYW) traverse the membrane as a helical segment. The Lumenal portion of the chain corresponds to 156 to 167 (TGSSTNFPVHVR). Residues 168–186 (LLLCLFFGILVLVADVVVY) form a helical membrane-spanning segment. The Cytoplasmic portion of the chain corresponds to 187-215 (NSYLKKLEEAKVKEKTKVEKKKVLSKITL).

Its subcellular location is the endoplasmic reticulum membrane. In terms of biological role, required for vacuolar ATPase assembly. The sequence is that of Vacuolar ATPase assembly integral membrane protein VPH2 (VPH2) from Saccharomyces cerevisiae (strain ATCC 204508 / S288c) (Baker's yeast).